The chain runs to 157 residues: Ribosome maturation factor RimP (157 aa).

The protein belongs to the RimP family.

It localises to the cytoplasm. Its function is as follows. Required for maturation of 30S ribosomal subunits. This Ligilactobacillus salivarius (strain UCC118) (Lactobacillus salivarius) protein is Ribosome maturation factor RimP.